The chain runs to 156 residues: 6,7-dimethyl-8-ribityllumazine synthase (156 aa).

5-amino-6-(D-ribitylamino)uracil contacts are provided by residues Phe-23, 57-59, and 81-83; these read AFE and AVI. (2S)-2-hydroxy-3-oxobutyl phosphate is bound at residue 86 to 87; sequence AT. The Proton donor role is filled by His-89. 5-amino-6-(D-ribitylamino)uracil is bound at residue Asn-114. Position 128 (Arg-128) interacts with (2S)-2-hydroxy-3-oxobutyl phosphate.

The protein belongs to the DMRL synthase family.

The enzyme catalyses (2S)-2-hydroxy-3-oxobutyl phosphate + 5-amino-6-(D-ribitylamino)uracil = 6,7-dimethyl-8-(1-D-ribityl)lumazine + phosphate + 2 H2O + H(+). It participates in cofactor biosynthesis; riboflavin biosynthesis; riboflavin from 2-hydroxy-3-oxobutyl phosphate and 5-amino-6-(D-ribitylamino)uracil: step 1/2. Its function is as follows. Catalyzes the formation of 6,7-dimethyl-8-ribityllumazine by condensation of 5-amino-6-(D-ribitylamino)uracil with 3,4-dihydroxy-2-butanone 4-phosphate. This is the penultimate step in the biosynthesis of riboflavin. This chain is 6,7-dimethyl-8-ribityllumazine synthase, found in Aliarcobacter butzleri (strain RM4018) (Arcobacter butzleri).